The sequence spans 148 residues: Lipoprotein signal peptidase (148 aa).

The next 2 membrane-spanning stretches (helical) occupy residues 57 to 77 (VLLV…FIKY) and 88 to 105 (VSFI…RIFY). Catalysis depends on residues Asp110 and Asp129. The helical transmembrane segment at 124–144 (TFNIADILVVVGTIMLAIFLL) threads the bilayer.

This sequence belongs to the peptidase A8 family.

Its subcellular location is the cell membrane. The catalysed reaction is Release of signal peptides from bacterial membrane prolipoproteins. Hydrolyzes -Xaa-Yaa-Zaa-|-(S,diacylglyceryl)Cys-, in which Xaa is hydrophobic (preferably Leu), and Yaa (Ala or Ser) and Zaa (Gly or Ala) have small, neutral side chains.. It functions in the pathway protein modification; lipoprotein biosynthesis (signal peptide cleavage). In terms of biological role, this protein specifically catalyzes the removal of signal peptides from prolipoproteins. This is Lipoprotein signal peptidase from Clostridium novyi (strain NT).